We begin with the raw amino-acid sequence, 146 residues long: MPRSSFSGSLSSPKLDVVIDMGNPFLNLTVDGFLKIGAVAATRSVAEDTFHIIRKGSISSNDFEKSLKKMCKEGAYWGAIAGVYVGMEYGVERIRGTRDWKNAMFGGAVTGALVSAASNNKKDKIAVDAITGAAIATAAEFINYLT.

The tract at residues 1-73 (MPRSSFSGSL…EKSLKKMCKE (73 aa)) is contains 4 beta strands. Transmembrane regions (helical) follow at residues 75–91 (AYWG…EYGV), 103–119 (AMFG…AASN), and 128–146 (DAIT…NYLT).

Belongs to the Tim17/Tim22/Tim23 family. Plastid outer envelope porin OEP16 (TC 1.B.30) subfamily. In terms of assembly, homodimer and oligomers in membrane.

It localises to the plastid. Its subcellular location is the chloroplast outer membrane. The protein localises to the etioplast membrane. In terms of biological role, voltage-dependent high-conductance channel with a slight cation-selectivity; selective for amino acids but excludes triosephosphates or uncharged sugars. Non-essential amino acid-selective channel protein and translocation pore for NADPH:protochlorophyllide oxidoreductase A (PORA) and possibly PORB. The sequence is that of Outer envelope pore protein 16, chloroplastic (OEP16) from Pisum sativum (Garden pea).